We begin with the raw amino-acid sequence, 151 residues long: MKVILRKDVAALGDAGEVVAVKNGYANNFLIPQGMATRATEGTLRALETEKKQQAKKMELKRKSARDLAARIEQMALKVQAKAGESGKLFGTVTAADIAEVLKAQGVEIDRRKITMEAPVKTLGKYEAEVKLFSDVVVRVSFEVEAEGVEA.

It belongs to the bacterial ribosomal protein bL9 family.

Functionally, binds to the 23S rRNA. The sequence is that of Large ribosomal subunit protein bL9 from Chlorobium phaeovibrioides (strain DSM 265 / 1930) (Prosthecochloris vibrioformis (strain DSM 265)).